Here is a 601-residue protein sequence, read N- to C-terminus: Elongation factor 4 (601 aa).

The tr-type G domain maps to S5 to E187. GTP-binding positions include D17–T22 and N134–D137.

It belongs to the TRAFAC class translation factor GTPase superfamily. Classic translation factor GTPase family. LepA subfamily.

The protein localises to the cell inner membrane. The enzyme catalyses GTP + H2O = GDP + phosphate + H(+). Functionally, required for accurate and efficient protein synthesis under certain stress conditions. May act as a fidelity factor of the translation reaction, by catalyzing a one-codon backward translocation of tRNAs on improperly translocated ribosomes. Back-translocation proceeds from a post-translocation (POST) complex to a pre-translocation (PRE) complex, thus giving elongation factor G a second chance to translocate the tRNAs correctly. Binds to ribosomes in a GTP-dependent manner. This is Elongation factor 4 from Oleidesulfovibrio alaskensis (strain ATCC BAA-1058 / DSM 17464 / G20) (Desulfovibrio alaskensis).